A 280-amino-acid polypeptide reads, in one-letter code: Formyltetrahydrofolate deformylase (280 aa).

Residues 8-86 enclose the ACT domain; that stretch reads VLRTICPDQK…RELNPAGRRR (79 aa). D225 is a catalytic residue.

This sequence belongs to the PurU family.

The catalysed reaction is (6R)-10-formyltetrahydrofolate + H2O = (6S)-5,6,7,8-tetrahydrofolate + formate + H(+). Its pathway is purine metabolism; IMP biosynthesis via de novo pathway; formate from 10-formyl-5,6,7,8-tetrahydrofolate: step 1/1. Functionally, catalyzes the hydrolysis of 10-formyltetrahydrofolate (formyl-FH4) to formate and tetrahydrofolate (FH4). This is Formyltetrahydrofolate deformylase from Escherichia coli O6:H1 (strain CFT073 / ATCC 700928 / UPEC).